A 244-amino-acid polypeptide reads, in one-letter code: uncharacterized protein (244 aa).

Helical transmembrane passes span 22–42 (IMLQ…LLSF), 63–83 (FIFS…WGLT), 110–130 (VILL…EAFA), 140–160 (IMSL…NLTV), 186–206 (GVLF…IFQL), and 213–233 (AVFD…MLVV).

It localises to the cell membrane. This is an uncharacterized protein from Haemophilus influenzae (strain ATCC 51907 / DSM 11121 / KW20 / Rd).